Reading from the N-terminus, the 201-residue chain is ATP-dependent Clp protease proteolytic subunit (201 aa).

S98 serves as the catalytic Nucleophile. Residue H123 is part of the active site.

The protein belongs to the peptidase S14 family. In terms of assembly, fourteen ClpP subunits assemble into 2 heptameric rings which stack back to back to give a disk-like structure with a central cavity, resembling the structure of eukaryotic proteasomes.

The protein localises to the cytoplasm. It carries out the reaction Hydrolysis of proteins to small peptides in the presence of ATP and magnesium. alpha-casein is the usual test substrate. In the absence of ATP, only oligopeptides shorter than five residues are hydrolyzed (such as succinyl-Leu-Tyr-|-NHMec, and Leu-Tyr-Leu-|-Tyr-Trp, in which cleavage of the -Tyr-|-Leu- and -Tyr-|-Trp bonds also occurs).. In terms of biological role, cleaves peptides in various proteins in a process that requires ATP hydrolysis. Has a chymotrypsin-like activity. Plays a major role in the degradation of misfolded proteins. The chain is ATP-dependent Clp protease proteolytic subunit from Rickettsia akari (strain Hartford).